An 84-amino-acid chain; its full sequence is Small ribosomal subunit protein bS16 (84 aa).

It belongs to the bacterial ribosomal protein bS16 family.

The sequence is that of Small ribosomal subunit protein bS16 from Cupriavidus pinatubonensis (strain JMP 134 / LMG 1197) (Cupriavidus necator (strain JMP 134)).